Reading from the N-terminus, the 192-residue chain is UPF0149 protein KPN78578_32810 (192 aa).

The protein belongs to the UPF0149 family.

This is UPF0149 protein KPN78578_32810 from Klebsiella pneumoniae subsp. pneumoniae (strain ATCC 700721 / MGH 78578).